An 876-amino-acid polypeptide reads, in one-letter code: Valine--tRNA ligase (876 aa).

The 'HIGH' region signature appears at 44–54; sequence PNVTGKLHLGH. The 'KMSKS' region signature appears at 520-524; that stretch reads KMSKS. Lys-523 contributes to the ATP binding site. The stretch at 805-876 forms a coiled coil; the sequence is LEGLIDMDKE…VKSRIEQLKA (72 aa).

The protein belongs to the class-I aminoacyl-tRNA synthetase family. ValS type 1 subfamily. In terms of assembly, monomer.

It localises to the cytoplasm. It carries out the reaction tRNA(Val) + L-valine + ATP = L-valyl-tRNA(Val) + AMP + diphosphate. Functionally, catalyzes the attachment of valine to tRNA(Val). As ValRS can inadvertently accommodate and process structurally similar amino acids such as threonine, to avoid such errors, it has a 'posttransfer' editing activity that hydrolyzes mischarged Thr-tRNA(Val) in a tRNA-dependent manner. The sequence is that of Valine--tRNA ligase from Staphylococcus epidermidis (strain ATCC 35984 / DSM 28319 / BCRC 17069 / CCUG 31568 / BM 3577 / RP62A).